A 188-amino-acid chain; its full sequence is Ion-translocating oxidoreductase complex subunit B (188 aa).

Residues Met-1–Ala-23 are hydrophobic. The region spanning Glu-29–Thr-88 is the 4Fe-4S domain. Positions 46, 49, 54, 71, 113, 116, 119, 123, 143, 146, 149, and 153 each coordinate [4Fe-4S] cluster. 4Fe-4S ferredoxin-type domains follow at residues Thr-104–Arg-133 and Gln-134–Lys-163.

This sequence belongs to the 4Fe4S bacterial-type ferredoxin family. RnfB subfamily. As to quaternary structure, the complex is composed of six subunits: RnfA, RnfB, RnfC, RnfD, RnfE and RnfG. Requires [4Fe-4S] cluster as cofactor.

Its subcellular location is the cellular chromatophore membrane. Its function is as follows. Part of a membrane-bound complex that couples electron transfer with translocation of ions across the membrane. The chain is Ion-translocating oxidoreductase complex subunit B from Cereibacter sphaeroides (strain ATCC 17029 / ATH 2.4.9) (Rhodobacter sphaeroides).